The primary structure comprises 417 residues: Type II methyltransferase M.Eco47II (417 aa).

An SAM-dependent MTase C5-type domain is found at 81 to 414; it reads YTVLELFAGA…KSVVHLLDKI (334 aa). The active site involves C153.

This sequence belongs to the class I-like SAM-binding methyltransferase superfamily. C5-methyltransferase family.

It catalyses the reaction a 2'-deoxycytidine in DNA + S-adenosyl-L-methionine = a 5-methyl-2'-deoxycytidine in DNA + S-adenosyl-L-homocysteine + H(+). In terms of biological role, a methylase that recognizes the double-stranded sequence 5'-GGNCC-3', methylates C-? on both strands, and protects the DNA from cleavage by both the Eco47I and Eco47II endonucleases. The protein is Type II methyltransferase M.Eco47II of Escherichia coli.